The primary structure comprises 137 residues: 6,7-dimethyl-8-ribityllumazine synthase (137 aa).

Residues phenylalanine 11, 43 to 45, and 67 to 69 each bind 5-amino-6-(D-ribitylamino)uracil; these read SFD and CVI. 72 to 73 is a binding site for (2S)-2-hydroxy-3-oxobutyl phosphate; it reads DT. The active-site Proton donor is histidine 75. 5-amino-6-(D-ribitylamino)uracil is bound at residue leucine 100. Arginine 115 is a binding site for (2S)-2-hydroxy-3-oxobutyl phosphate.

It belongs to the DMRL synthase family. In terms of assembly, forms an icosahedral capsid composed of 60 subunits, arranged as a dodecamer of pentamers.

The catalysed reaction is (2S)-2-hydroxy-3-oxobutyl phosphate + 5-amino-6-(D-ribitylamino)uracil = 6,7-dimethyl-8-(1-D-ribityl)lumazine + phosphate + 2 H2O + H(+). Its pathway is cofactor biosynthesis; riboflavin biosynthesis; riboflavin from 2-hydroxy-3-oxobutyl phosphate and 5-amino-6-(D-ribitylamino)uracil: step 1/2. In terms of biological role, catalyzes the formation of 6,7-dimethyl-8-ribityllumazine by condensation of 5-amino-6-(D-ribitylamino)uracil with 3,4-dihydroxy-2-butanone 4-phosphate. This is the penultimate step in the biosynthesis of riboflavin. This chain is 6,7-dimethyl-8-ribityllumazine synthase, found in Methanococcus maripaludis (strain C6 / ATCC BAA-1332).